The primary structure comprises 356 residues: Histidinol-phosphate aminotransferase (356 aa).

Lysine 214 is modified (N6-(pyridoxal phosphate)lysine).

It belongs to the class-II pyridoxal-phosphate-dependent aminotransferase family. Histidinol-phosphate aminotransferase subfamily. As to quaternary structure, homodimer. The cofactor is pyridoxal 5'-phosphate.

The enzyme catalyses L-histidinol phosphate + 2-oxoglutarate = 3-(imidazol-4-yl)-2-oxopropyl phosphate + L-glutamate. The protein operates within amino-acid biosynthesis; L-histidine biosynthesis; L-histidine from 5-phospho-alpha-D-ribose 1-diphosphate: step 7/9. The protein is Histidinol-phosphate aminotransferase of Shigella boydii serotype 4 (strain Sb227).